The following is a 394-amino-acid chain: Phosphoglycerate kinase (394 aa).

Substrate is bound by residues Asp21–Asn23, Arg36, His59–Arg62, Arg118, and Arg151. Position 183 is a phosphoserine (Ser183). Lys201 is an ATP binding site. Phosphothreonine is present on Thr299. ATP is bound by residues Glu323 and Gly350 to Ser353.

Belongs to the phosphoglycerate kinase family. Monomer.

It localises to the cytoplasm. The catalysed reaction is (2R)-3-phosphoglycerate + ATP = (2R)-3-phospho-glyceroyl phosphate + ADP. The protein operates within carbohydrate degradation; glycolysis; pyruvate from D-glyceraldehyde 3-phosphate: step 2/5. The sequence is that of Phosphoglycerate kinase (pgk) from Bacillus subtilis (strain 168).